The following is a 494-amino-acid chain: MQKKYVVALDQGTTSSRAIVFDHDANIVSVSQREFTQLYPNPGWVEHDPMEIWASQSSVLVEVLARAGIHSDEVAAIGITNQRETTVIWEKATGKPIYNAIVWQCRRSSEICEQLKAQGLEEYVRENTGLLLDPYFSGTKIKWILDNVPNARAQAERGELLFGTIDTWLVWKLTEGKVHVTDPTNAARTMLFNIHSLTWDNKLLEALDIPLSLLPEVKPSCSVYGTTRIAGEGSEIQVAGMAGDQQAALFGQLCVEPGMAKNTYGTGCFLLMNTGTKAVRSNHGLLTTVAVGPKGEVNYALEGSVFMGGATIQWLRDELGLIRDASDTEYFASKVADTNGVYLVPAFVGLGAPYWDPNARGALFGLTRGANRNHIIRAALESIAYQSKDLLDAMTKDSGVSLKRLKVDGGAVANDFLMQFQADITDVEVLRPSVCETTALGAAFLAGLAVGFWESVIELEHKACIDKHFIPNIDAETRVRLYAGWQDAVARTRA.

Residue Thr-13 participates in ADP binding. 3 residues coordinate ATP: Thr-13, Thr-14, and Ser-15. Position 13 (Thr-13) interacts with sn-glycerol 3-phosphate. Arg-17 contacts ADP. Sn-glycerol 3-phosphate is bound by residues Arg-83, Glu-84, Tyr-135, and Asp-244. Glycerol-binding residues include Arg-83, Glu-84, Tyr-135, Asp-244, and Gln-245. ADP contacts are provided by Thr-266 and Gly-309. Positions 266, 309, 313, and 410 each coordinate ATP. Residues Gly-410 and Asn-414 each coordinate ADP.

It belongs to the FGGY kinase family.

It carries out the reaction glycerol + ATP = sn-glycerol 3-phosphate + ADP + H(+). Its pathway is polyol metabolism; glycerol degradation via glycerol kinase pathway; sn-glycerol 3-phosphate from glycerol: step 1/1. Inhibited by fructose 1,6-bisphosphate (FBP). Key enzyme in the regulation of glycerol uptake and metabolism. Catalyzes the phosphorylation of glycerol to yield sn-glycerol 3-phosphate. The polypeptide is Glycerol kinase (Shewanella baltica (strain OS185)).